We begin with the raw amino-acid sequence, 146 residues long: 3-dehydroquinate dehydratase (146 aa).

The Proton acceptor role is filled by Tyr-23. Residues Asn-79, His-85, and Asp-92 each contribute to the substrate site. Catalysis depends on His-105, which acts as the Proton donor. Substrate is bound by residues 106 to 107 (IS) and Arg-116.

This sequence belongs to the type-II 3-dehydroquinase family. Homododecamer.

The enzyme catalyses 3-dehydroquinate = 3-dehydroshikimate + H2O. The protein operates within metabolic intermediate biosynthesis; chorismate biosynthesis; chorismate from D-erythrose 4-phosphate and phosphoenolpyruvate: step 3/7. Catalyzes a trans-dehydration via an enolate intermediate. This chain is 3-dehydroquinate dehydratase, found in Variovorax paradoxus (strain S110).